A 250-amino-acid chain; its full sequence is DNA repair protein RecO (250 aa).

This sequence belongs to the RecO family.

Functionally, involved in DNA repair and RecF pathway recombination. The chain is DNA repair protein RecO from Staphylococcus aureus (strain bovine RF122 / ET3-1).